We begin with the raw amino-acid sequence, 68 residues long: Protein SlyX homolog (68 aa).

Belongs to the SlyX family.

The chain is Protein SlyX homolog from Pseudomonas syringae pv. syringae (strain B728a).